The sequence spans 298 residues: Probable oxidoreductase (298 aa).

Position 9 to 33 (9 to 33 (VVTGGASGLGAETVRALAAAGAEVT)) interacts with NAD(+). Serine 139 lines the substrate pocket. Residue tyrosine 165 is the Proton acceptor of the active site.

This sequence belongs to the short-chain dehydrogenases/reductases (SDR) family.

This Streptomyces antibioticus protein is Probable oxidoreductase.